Consider the following 279-residue polypeptide: Tryptophan synthase alpha chain (279 aa).

Active-site proton acceptor residues include Glu-50 and Asp-61.

The protein belongs to the TrpA family. In terms of assembly, tetramer of two alpha and two beta chains.

It catalyses the reaction (1S,2R)-1-C-(indol-3-yl)glycerol 3-phosphate + L-serine = D-glyceraldehyde 3-phosphate + L-tryptophan + H2O. It participates in amino-acid biosynthesis; L-tryptophan biosynthesis; L-tryptophan from chorismate: step 5/5. The alpha subunit is responsible for the aldol cleavage of indoleglycerol phosphate to indole and glyceraldehyde 3-phosphate. This chain is Tryptophan synthase alpha chain, found in Azorhizobium caulinodans (strain ATCC 43989 / DSM 5975 / JCM 20966 / LMG 6465 / NBRC 14845 / NCIMB 13405 / ORS 571).